The following is a 537-amino-acid chain: Exodeoxyribonuclease 7 large subunit (537 aa).

A disordered region spans residues 508–537 (GEGAPVEPPQAARPSKGARTKAAQPSLFDD).

It belongs to the XseA family. In terms of assembly, heterooligomer composed of large and small subunits.

Its subcellular location is the cytoplasm. The enzyme catalyses Exonucleolytic cleavage in either 5'- to 3'- or 3'- to 5'-direction to yield nucleoside 5'-phosphates.. Bidirectionally degrades single-stranded DNA into large acid-insoluble oligonucleotides, which are then degraded further into small acid-soluble oligonucleotides. The chain is Exodeoxyribonuclease 7 large subunit from Azorhizobium caulinodans (strain ATCC 43989 / DSM 5975 / JCM 20966 / LMG 6465 / NBRC 14845 / NCIMB 13405 / ORS 571).